The sequence spans 660 residues: Bifunctional polymyxin resistance protein ArnA (660 aa).

The segment at 1-304 is formyltransferase ArnAFT; that stretch reads MKAVIFAYHD…TLGLVAGARL (304 aa). Residue histidine 104 is the Proton donor; for formyltransferase activity of the active site. (6R)-10-formyltetrahydrofolate-binding positions include arginine 114 and 136–140; that span reads VKRAD. The interval 314–660 is dehydrogenase ArnADH; it reads RRIRVLILGV…RSVDIAERAS (347 aa). NAD(+) contacts are provided by residues aspartate 347 and 368 to 369; that span reads DI. UDP-alpha-D-glucuronate is bound by residues alanine 393, tyrosine 398, and 432-433; that span reads TS. The active-site Proton acceptor; for decarboxylase activity is glutamate 434. UDP-alpha-D-glucuronate contacts are provided by residues arginine 460, asparagine 492, 526 to 535, and tyrosine 613; that span reads KLIDGGQQKR. Arginine 619 serves as the catalytic Proton donor; for decarboxylase activity.

This sequence in the N-terminal section; belongs to the Fmt family. UDP-L-Ara4N formyltransferase subfamily. It in the C-terminal section; belongs to the NAD(P)-dependent epimerase/dehydratase family. UDP-glucuronic acid decarboxylase subfamily. Homohexamer, formed by a dimer of trimers.

The catalysed reaction is UDP-alpha-D-glucuronate + NAD(+) = UDP-beta-L-threo-pentopyranos-4-ulose + CO2 + NADH. The enzyme catalyses UDP-4-amino-4-deoxy-beta-L-arabinose + (6R)-10-formyltetrahydrofolate = UDP-4-deoxy-4-formamido-beta-L-arabinose + (6S)-5,6,7,8-tetrahydrofolate + H(+). Its pathway is nucleotide-sugar biosynthesis; UDP-4-deoxy-4-formamido-beta-L-arabinose biosynthesis; UDP-4-deoxy-4-formamido-beta-L-arabinose from UDP-alpha-D-glucuronate: step 1/3. The protein operates within nucleotide-sugar biosynthesis; UDP-4-deoxy-4-formamido-beta-L-arabinose biosynthesis; UDP-4-deoxy-4-formamido-beta-L-arabinose from UDP-alpha-D-glucuronate: step 3/3. It functions in the pathway bacterial outer membrane biogenesis; lipopolysaccharide biosynthesis. In terms of biological role, bifunctional enzyme that catalyzes the oxidative decarboxylation of UDP-glucuronic acid (UDP-GlcUA) to UDP-4-keto-arabinose (UDP-Ara4O) and the addition of a formyl group to UDP-4-amino-4-deoxy-L-arabinose (UDP-L-Ara4N) to form UDP-L-4-formamido-arabinose (UDP-L-Ara4FN). The modified arabinose is attached to lipid A and is required for resistance to polymyxin and cationic antimicrobial peptides. The sequence is that of Bifunctional polymyxin resistance protein ArnA (arnA) from Salmonella typhimurium (strain LT2 / SGSC1412 / ATCC 700720).